The primary structure comprises 293 residues: Bifunctional protein FolD (293 aa).

Residues 162 to 164 and I227 contribute to the NADP(+) site; that span reads GQS.

Belongs to the tetrahydrofolate dehydrogenase/cyclohydrolase family. As to quaternary structure, homodimer.

The catalysed reaction is (6R)-5,10-methylene-5,6,7,8-tetrahydrofolate + NADP(+) = (6R)-5,10-methenyltetrahydrofolate + NADPH. It catalyses the reaction (6R)-5,10-methenyltetrahydrofolate + H2O = (6R)-10-formyltetrahydrofolate + H(+). It participates in one-carbon metabolism; tetrahydrofolate interconversion. Functionally, catalyzes the oxidation of 5,10-methylenetetrahydrofolate to 5,10-methenyltetrahydrofolate and then the hydrolysis of 5,10-methenyltetrahydrofolate to 10-formyltetrahydrofolate. The protein is Bifunctional protein FolD of Metamycoplasma arthritidis (strain 158L3-1) (Mycoplasma arthritidis).